Here is a 125-residue protein sequence, read N- to C-terminus: Large ribosomal subunit protein uL22c (125 aa).

This sequence belongs to the universal ribosomal protein uL22 family. Part of the 50S ribosomal subunit.

The protein resides in the plastid. It is found in the chloroplast. This protein binds specifically to 23S rRNA. In terms of biological role, the globular domain of the protein is located near the polypeptide exit tunnel on the outside of the subunit, while an extended beta-hairpin is found that lines the wall of the exit tunnel in the center of the 70S ribosome. This is Large ribosomal subunit protein uL22c (rpl22) from Nymphaea alba (White water-lily).